The sequence spans 215 residues: Probable transaldolase (215 aa).

The Schiff-base intermediate with substrate role is filled by lysine 83.

This sequence belongs to the transaldolase family. Type 3B subfamily.

Its subcellular location is the cytoplasm. The catalysed reaction is D-sedoheptulose 7-phosphate + D-glyceraldehyde 3-phosphate = D-erythrose 4-phosphate + beta-D-fructose 6-phosphate. The protein operates within carbohydrate degradation; pentose phosphate pathway; D-glyceraldehyde 3-phosphate and beta-D-fructose 6-phosphate from D-ribose 5-phosphate and D-xylulose 5-phosphate (non-oxidative stage): step 2/3. Its function is as follows. Transaldolase is important for the balance of metabolites in the pentose-phosphate pathway. The sequence is that of Probable transaldolase from Anaeromyxobacter sp. (strain Fw109-5).